The following is a 97-amino-acid chain: High mobility group protein homolog NHP1 (97 aa).

Residues 1–24 (MAGASDRTGVRRPRKAKKDPNAPK) are disordered. The segment at residues 23–93 (PKRALSSYMF…RYEREKAEYA (71 aa)) is a DNA-binding region (HMG box).

It localises to the nucleus. The polypeptide is High mobility group protein homolog NHP1 (Babesia bovis).